We begin with the raw amino-acid sequence, 189 residues long: Stathmin-4 (189 aa).

2 S-palmitoyl cysteine lipidation sites follow: cysteine 20 and cysteine 22. Residues 48 to 189 form the SLD domain; it reads SDMEVIELNK…NKELKEEASR (142 aa). Serine 90 carries the phosphoserine modification. Positions 90 to 188 form a coiled coil; that stretch reads SLEEIQKKLE…KNKELKEEAS (99 aa). The segment at 168–189 is disordered; it reads QEKDKHAEEVRKNKELKEEASR.

It belongs to the stathmin family.

The protein resides in the golgi apparatus. Its subcellular location is the cell projection. The protein localises to the growth cone. It is found in the axon. Functionally, exhibits microtubule-destabilizing activity. The sequence is that of Stathmin-4 (STMN4) from Homo sapiens (Human).